A 177-amino-acid chain; its full sequence is Large ribosomal subunit protein uL6 (177 aa).

The protein belongs to the universal ribosomal protein uL6 family. Part of the 50S ribosomal subunit.

In terms of biological role, this protein binds to the 23S rRNA, and is important in its secondary structure. It is located near the subunit interface in the base of the L7/L12 stalk, and near the tRNA binding site of the peptidyltransferase center. The sequence is that of Large ribosomal subunit protein uL6 from Haemophilus ducreyi (strain 35000HP / ATCC 700724).